The following is a 344-amino-acid chain: Ferredoxin--NADP reductase (344 aa).

FAD-binding residues include serine 12, aspartate 31, lysine 39, tyrosine 43, valine 83, isoleucine 118, aspartate 285, and serine 326.

The protein belongs to the ferredoxin--NADP reductase type 2 family. As to quaternary structure, homodimer. The cofactor is FAD.

It carries out the reaction 2 reduced [2Fe-2S]-[ferredoxin] + NADP(+) + H(+) = 2 oxidized [2Fe-2S]-[ferredoxin] + NADPH. The chain is Ferredoxin--NADP reductase from Staphylococcus aureus (strain JH1).